An 89-amino-acid chain; its full sequence is UPF0237 protein Cgl1544/cg1742 (89 aa).

Residues 4 to 82 (IMTVTGQDHT…LVIRIQSEAL (79 aa)) form the ACT domain.

The protein belongs to the UPF0237 family.

The protein is UPF0237 protein Cgl1544/cg1742 of Corynebacterium glutamicum (strain ATCC 13032 / DSM 20300 / JCM 1318 / BCRC 11384 / CCUG 27702 / LMG 3730 / NBRC 12168 / NCIMB 10025 / NRRL B-2784 / 534).